Consider the following 442-residue polypeptide: Probable alpha-galactosidase B (442 aa).

An N-terminal signal peptide occupies residues 1 to 19; the sequence is MQRYISLSVSLSLLSGANA. Disulfide bonds link cysteine 42-cysteine 74 and cysteine 124-cysteine 154. Aspartate 152 functions as the Nucleophile in the catalytic mechanism. N-linked (GlcNAc...) asparagine glycans are attached at residues asparagine 159, asparagine 173, asparagine 179, and asparagine 215. 224–228 contacts substrate; it reads EWGQA. Asparagine 235 is a glycosylation site (N-linked (GlcNAc...) asparagine). Aspartate 246 acts as the Proton donor in catalysis. Asparagine 285 is a glycosylation site (N-linked (GlcNAc...) asparagine).

Belongs to the glycosyl hydrolase 27 family.

It is found in the secreted. It carries out the reaction Hydrolysis of terminal, non-reducing alpha-D-galactose residues in alpha-D-galactosides, including galactose oligosaccharides, galactomannans and galactolipids.. Functionally, hydrolyzes a variety of simple alpha-D-galactoside as well as more complex molecules such as oligosaccharides and polysaccharides. The protein is Probable alpha-galactosidase B (aglB) of Aspergillus oryzae (strain ATCC 42149 / RIB 40) (Yellow koji mold).